Here is a 373-residue protein sequence, read N- to C-terminus: MFSKSLEALHHAKRYRKRELFDPLLKDYASNDYLGLSVKKDLLQNAFNKLQSFVSHSPKASMLVNGYHPLHAELEERLANLLGFESALLVGSGFLGNLALIDTLLVKNALLFMDAHYHASGIFSTKIKPNQVIFFSHNDIKDLKQKLFNAPKNKIKFIAIEGVYSMDASVAPYDFYAIIQEIPNAFLIVDEAHSFGTIGENLLGFLEYYRIKEKDKIIKLSTFSKALASYGACILAPLQTIEFLTNRAKSVIYTTALSLLDTALTLAHLEYFIVQKQELKNELSKHQQIIFETLGIRTLAGFFTLEFESNPALLNAHHFLKEKGFLVGAIRPPTVSKPLLRVSLSLKNSLEDTKELANTLLNYSKIQSSFKSG.

Residue R16 participates in substrate binding. Pyridoxal 5'-phosphate is bound at residue G93–F94. H118 is a substrate binding site. Pyridoxal 5'-phosphate is bound by residues S165, D190–H193, and T222–K225. An N6-(pyridoxal phosphate)lysine modification is found at K225. T334 is a binding site for substrate.

The protein belongs to the class-II pyridoxal-phosphate-dependent aminotransferase family. BioF subfamily. In terms of assembly, homodimer. Requires pyridoxal 5'-phosphate as cofactor.

It catalyses the reaction 6-carboxyhexanoyl-[ACP] + L-alanine + H(+) = (8S)-8-amino-7-oxononanoate + holo-[ACP] + CO2. It functions in the pathway cofactor biosynthesis; biotin biosynthesis. Catalyzes the decarboxylative condensation of pimeloyl-[acyl-carrier protein] and L-alanine to produce 8-amino-7-oxononanoate (AON), [acyl-carrier protein], and carbon dioxide. The sequence is that of 8-amino-7-oxononanoate synthase from Helicobacter pylori (strain ATCC 700392 / 26695) (Campylobacter pylori).